Here is an 85-residue protein sequence, read N- to C-terminus: Makatoxin-2 (85 aa).

Positions Met-1 to Ser-19 are cleaved as a signal peptide. An LCN-type CS-alpha/beta domain is found at Arg-21–Arg-83. Intrachain disulfides connect Cys-31-Cys-82, Cys-35-Cys-55, Cys-41-Cys-65, and Cys-45-Cys-67.

It belongs to the long (4 C-C) scorpion toxin superfamily. Sodium channel inhibitor family. Alpha subfamily. As to expression, expressed by the venom gland.

It is found in the secreted. Functionally, this protein markedly relaxes the rat carbachol-precontracted anococcygeus muscle. This relaxation is inhibited by the inhibitor of nitric oxide (NO) synthase, N-nitro-L-arginine methyl ester (L-NAME), suggesting that the response induced by this protein is NO-mediated. In Olivierus martensii (Manchurian scorpion), this protein is Makatoxin-2.